The following is a 145-amino-acid chain: D-aminoacyl-tRNA deacylase (145 aa).

Positions 137–138 (GP) match the Gly-cisPro motif, important for rejection of L-amino acids motif.

Belongs to the DTD family. In terms of assembly, homodimer.

It localises to the cytoplasm. The catalysed reaction is glycyl-tRNA(Ala) + H2O = tRNA(Ala) + glycine + H(+). It carries out the reaction a D-aminoacyl-tRNA + H2O = a tRNA + a D-alpha-amino acid + H(+). An aminoacyl-tRNA editing enzyme that deacylates mischarged D-aminoacyl-tRNAs. Also deacylates mischarged glycyl-tRNA(Ala), protecting cells against glycine mischarging by AlaRS. Acts via tRNA-based rather than protein-based catalysis; rejects L-amino acids rather than detecting D-amino acids in the active site. By recycling D-aminoacyl-tRNA to D-amino acids and free tRNA molecules, this enzyme counteracts the toxicity associated with the formation of D-aminoacyl-tRNA entities in vivo and helps enforce protein L-homochirality. In Shewanella sp. (strain ANA-3), this protein is D-aminoacyl-tRNA deacylase.